Reading from the N-terminus, the 324-residue chain is Tetrachlorobenzoquinone reductase (324 aa).

Residues 5 to 107 (VSTIDMTVTQ…VPPANNFALV (103 aa)) enclose the FAD-binding FR-type domain. The 2Fe-2S ferredoxin-type domain maps to 238–324 (FTVVLARRSG…SKSPRLVLDI (87 aa)). Residues cysteine 273, cysteine 278, cysteine 281, and cysteine 311 each coordinate [2Fe-2S] cluster.

It belongs to the PDR/VanB family. As to quaternary structure, homotrimer. The cofactor is FMN. [2Fe-2S] cluster is required as a cofactor.

It carries out the reaction 2,3,5,6-tetrachlorohydroquinone + NAD(+) + H(+) = 2,3,5,6-tetrachloro-1,4-benzoquinone + NADH. The protein operates within xenobiotic degradation; pentachlorophenol degradation. With respect to regulation, in vitro, activated by tetrachlorohydroquinone (TCHQ) at low concentrations and inhibited at high concentrations (above 200 uM). However, PcpD would only be stimulated by tetrachlorohydroquinone (TCHQ) under in vivo conditions due to the toxicity of tetrachlorohydroquinone (TCHQ). Competitively inhibited by pentachlorophenol (PCP) in a concentration-dependent manner. PcpD is regulated by tetrachlorohydroquinone (TCHQ) and pentachlorophenol (PCP) using a mechanism, which maintains tetrachlorobenzoquinone at a level that would neither significantly decrease the biodegradation of pentachlorophenol (PCP) nor cause cytotoxicity in cells. Its function is as follows. Involved in the degradation of the xenobiocide pentachlorophenol (PCP). Catalyzes the reduction of tetrachlorobenzoquinone (TCBQ) to yield tetrachlorohydroquinone (TCHQ). Also able to reduce 2,6-dichloroindophenol (DCIP). The sequence is that of Tetrachlorobenzoquinone reductase from Sphingobium chlorophenolicum.